The primary structure comprises 152 residues: Small ribosomal subunit protein uS19 (152 aa).

It belongs to the universal ribosomal protein uS19 family.

This chain is Small ribosomal subunit protein uS19 (RPS15), found in Podospora anserina (Pleurage anserina).